A 316-amino-acid polypeptide reads, in one-letter code: Short-chain dehydrogenase/reductase family 16C member 6 (316 aa).

40 to 64 contacts NAD(+); it reads LITGAASGLGRLLAIKFASLGAILV. A substrate-binding site is contributed by Ser-173. Tyr-186 serves as the catalytic Proton acceptor.

This sequence belongs to the short-chain dehydrogenases/reductases (SDR) family.

The protein is Short-chain dehydrogenase/reductase family 16C member 6 (SDR16C6) of Bos taurus (Bovine).